The chain runs to 466 residues: Glutamate--tRNA ligase 1 (466 aa).

Positions 9 to 19 (PSPTGLLHIGN) match the 'HIGH' region motif. Residues 238–242 (KLSKR) carry the 'KMSKS' region motif. Residue K241 participates in ATP binding.

The protein belongs to the class-I aminoacyl-tRNA synthetase family. Glutamate--tRNA ligase type 1 subfamily. In terms of assembly, monomer.

It localises to the cytoplasm. It carries out the reaction tRNA(Glu) + L-glutamate + ATP = L-glutamyl-tRNA(Glu) + AMP + diphosphate. Functionally, catalyzes the attachment of glutamate to tRNA(Glu) in a two-step reaction: glutamate is first activated by ATP to form Glu-AMP and then transferred to the acceptor end of tRNA(Glu). The sequence is that of Glutamate--tRNA ligase 1 from Gluconacetobacter diazotrophicus (strain ATCC 49037 / DSM 5601 / CCUG 37298 / CIP 103539 / LMG 7603 / PAl5).